The following is a 237-amino-acid chain: Endonuclease NucS (237 aa).

It belongs to the NucS endonuclease family.

The protein resides in the cytoplasm. Its function is as follows. Cleaves both 3' and 5' ssDNA extremities of branched DNA structures. The chain is Endonuclease NucS from Saccharolobus islandicus (strain L.S.2.15 / Lassen #1) (Sulfolobus islandicus).